The following is a 1322-amino-acid chain: MEILRGSPALSEFRVNKLLERCRELDLPVSGIYAEFMHFADVSAPLNSDEQSKLASLLTYGPTIAEHEPTGTMLLVTPRPGTISPWSSKSTDIAQNCALGNVKRLERGTAYYVEVTADLTNAQLTDLKALIHDRMMEVVFTDVDSAAALFTQAEPAPVQSVDILVGGRKALEDANLKLGLALAEDEIDYLVENFTMLGRNPNDIELMMFAQANSEHCRHKIFNADWTIDGVEQEKSLFKMIKNTYEKNHEHVLSAYKDNAAVMEGSEVGRFFPNPESRQYNYHQEAAHILMKVETHNHPTAISPWPGASTGSGGEIRDEGATGLGGKPKAGLVGFTVSNLRVPGFEQPWETDFGKPGRIVNALEIMLEGPLGGAAFNNEFGRPNLLGYFRTYEEKVTSHNGEEIRGYHKPIMIAGGMGNIRADHVQKKEIPVGAKLIVLGGPAMNIGLGGGAASSMASGQSAEDLDFASVQRENPEMERRCQEVIDRCWQMGDANPIAFIHDVGAGGISNALPELVDDGERGGKFQLRNVPNDEPGMSPLEIWCNESQERYVMAVAPENLAVFEAICKRERAPFAVVGEATEERHLTLEDEHFDNTPIDMPMDILLGKAPKMHRDAKTLKVEGQAIDRSGIELEAATQRVLRLPAVAEKTFLITIGDRSVTGLVARDQMVGPWQVPVANCAVTAASYDTYHGEAMSMGERTPVALLDFGASARLAVGEAITNIASADIGDMKRINLSANWMSPAGHPGEDAGLYEAVKAVGEELCPALGLTIPVGKDSMSMKTKWEQDGEQKEVTSPLSLVITAFGRVEDVRKTVTPQLRTDKGESSLILIDLGCGQNRLGATALAQVYKQLGDKPADVDNPELLKGFFYAVQALVRDEKVLAYHDRGDGGLYVTLAEMAFAGHTGVEVDINTSESDACDDVLAMLFNEELGAVLQVRTEDLDTVKSVLAEHGLTACSHVIGTVVDEDVVRIWNGNDRVLEQSRTDLRTVWAETTYQMQAMRDNPAGALQEFEAKKDNSDPGLSAQLTFDINEDVAAPFIAAPFITKAPKTGASVVNAPAINLGAKPQMAILREQGVNSHVEMAAAFDRAGFEATDVHMSDILSGNVQLEGFNGLVACGGFSYGDVLGAGEGWAKSVLFNNIARDQFEAFFKRNDTFSLGVCNGCQMMSNLSELIPGSDLWPRFVRNESERFEARFSLVEVQKSDSLFFNEMAGSRMPIAVSHGEGRVEVRNGEHLNAIEQSGTVALRYLDNFGNVTQNYPANPNGSPNGITGLTTMDGRVTIMMPHPERVFRTVANSWHPDDWNENSPWMRMFRNARVNLG.

Residues 307–318 and Ala-678 contribute to the ATP site; that span reads GASTGSGGEIRD. The Mg(2+) site is built by Glu-718, Asn-722, and Asp-886. The region spanning 1069–1322 is the Glutamine amidotransferase type-1 domain; the sequence is MAILREQGVN…MFRNARVNLG (254 aa). The active-site Nucleophile is the Cys-1162. Catalysis depends on residues His-1287 and Glu-1289.

It in the N-terminal section; belongs to the FGAMS family. As to quaternary structure, monomer.

It is found in the cytoplasm. It carries out the reaction N(2)-formyl-N(1)-(5-phospho-beta-D-ribosyl)glycinamide + L-glutamine + ATP + H2O = 2-formamido-N(1)-(5-O-phospho-beta-D-ribosyl)acetamidine + L-glutamate + ADP + phosphate + H(+). It participates in purine metabolism; IMP biosynthesis via de novo pathway; 5-amino-1-(5-phospho-D-ribosyl)imidazole from N(2)-formyl-N(1)-(5-phospho-D-ribosyl)glycinamide: step 1/2. Functionally, phosphoribosylformylglycinamidine synthase involved in the purines biosynthetic pathway. Catalyzes the ATP-dependent conversion of formylglycinamide ribonucleotide (FGAR) and glutamine to yield formylglycinamidine ribonucleotide (FGAM) and glutamate. The protein is Phosphoribosylformylglycinamidine synthase of Photobacterium profundum (strain SS9).